The chain runs to 93 residues: Putative defensin-like protein 283 (93 aa).

An N-terminal signal peptide occupies residues 1 to 24 (MTKIGFYLATYATIYIILSPGLLA). 3 disulfides stabilise this stretch: C43–C83, C66–C90, and C72–C92.

It belongs to the DEFL family.

It is found in the secreted. This chain is Putative defensin-like protein 283, found in Arabidopsis thaliana (Mouse-ear cress).